A 205-amino-acid polypeptide reads, in one-letter code: Holliday junction resolvase RecU (205 aa).

The Mg(2+) site is built by Thr83, Asp85, Glu98, and Gln117.

The protein belongs to the RecU family. The cofactor is Mg(2+).

The protein localises to the cytoplasm. It catalyses the reaction Endonucleolytic cleavage at a junction such as a reciprocal single-stranded crossover between two homologous DNA duplexes (Holliday junction).. In terms of biological role, endonuclease that resolves Holliday junction intermediates in genetic recombination. Cleaves mobile four-strand junctions by introducing symmetrical nicks in paired strands. Promotes annealing of linear ssDNA with homologous dsDNA. Required for DNA repair, homologous recombination and chromosome segregation. The protein is Holliday junction resolvase RecU of Streptococcus suis (strain 98HAH33).